Consider the following 327-residue polypeptide: Probable cell division protein WhiA (327 aa).

A DNA-binding region (H-T-H motif) is located at residues 275 to 308; sequence SLEELGRLADPPMTKDAVAGRIRRLLSMADRKAK.

It belongs to the WhiA family.

Functionally, involved in cell division and chromosome segregation. This Mycobacterium leprae (strain Br4923) protein is Probable cell division protein WhiA.